Here is a 69-residue protein sequence, read N- to C-terminus: Sec-independent protein translocase protein TatA (69 aa).

A helical membrane pass occupies residues 1-21 (MFGLGGQELILILLIILLLFG).

It belongs to the TatA/E family. In terms of assembly, forms a complex with TatC.

Its subcellular location is the cell inner membrane. Part of the twin-arginine translocation (Tat) system that transports large folded proteins containing a characteristic twin-arginine motif in their signal peptide across membranes. TatA could form the protein-conducting channel of the Tat system. The chain is Sec-independent protein translocase protein TatA from Chlorobium phaeovibrioides (strain DSM 265 / 1930) (Prosthecochloris vibrioformis (strain DSM 265)).